We begin with the raw amino-acid sequence, 431 residues long: 3-phosphoshikimate 1-carboxyvinyltransferase (431 aa).

Residues Lys23, Ser24, and Arg28 each coordinate 3-phosphoshikimate. Position 23 (Lys23) interacts with phosphoenolpyruvate. Phosphoenolpyruvate contacts are provided by Gly96 and Arg124. Residues Ser169, Gln171, Asp317, and Lys344 each contribute to the 3-phosphoshikimate site. Phosphoenolpyruvate is bound at residue Gln171. Asp317 (proton acceptor) is an active-site residue. Phosphoenolpyruvate contacts are provided by Arg348 and Arg390.

The protein belongs to the EPSP synthase family. In terms of assembly, monomer.

The protein localises to the cytoplasm. The enzyme catalyses 3-phosphoshikimate + phosphoenolpyruvate = 5-O-(1-carboxyvinyl)-3-phosphoshikimate + phosphate. It participates in metabolic intermediate biosynthesis; chorismate biosynthesis; chorismate from D-erythrose 4-phosphate and phosphoenolpyruvate: step 6/7. Functionally, catalyzes the transfer of the enolpyruvyl moiety of phosphoenolpyruvate (PEP) to the 5-hydroxyl of shikimate-3-phosphate (S3P) to produce enolpyruvyl shikimate-3-phosphate and inorganic phosphate. The polypeptide is 3-phosphoshikimate 1-carboxyvinyltransferase (Syntrophotalea carbinolica (strain DSM 2380 / NBRC 103641 / GraBd1) (Pelobacter carbinolicus)).